Here is a 383-residue protein sequence, read N- to C-terminus: Succinyl-diaminopimelate desuccinylase (383 aa).

Position 74 (His-74) interacts with Zn(2+). Residue Asp-76 is part of the active site. Asp-107 provides a ligand contact to Zn(2+). Catalysis depends on Glu-141, which acts as the Proton acceptor. Positions 142, 170, and 356 each coordinate Zn(2+).

This sequence belongs to the peptidase M20A family. DapE subfamily. As to quaternary structure, homodimer. Requires Zn(2+) as cofactor. Co(2+) serves as cofactor.

It carries out the reaction N-succinyl-(2S,6S)-2,6-diaminopimelate + H2O = (2S,6S)-2,6-diaminopimelate + succinate. Its pathway is amino-acid biosynthesis; L-lysine biosynthesis via DAP pathway; LL-2,6-diaminopimelate from (S)-tetrahydrodipicolinate (succinylase route): step 3/3. Functionally, catalyzes the hydrolysis of N-succinyl-L,L-diaminopimelic acid (SDAP), forming succinate and LL-2,6-diaminopimelate (DAP), an intermediate involved in the bacterial biosynthesis of lysine and meso-diaminopimelic acid, an essential component of bacterial cell walls. This Cupriavidus pinatubonensis (strain JMP 134 / LMG 1197) (Cupriavidus necator (strain JMP 134)) protein is Succinyl-diaminopimelate desuccinylase.